The chain runs to 305 residues: GPI-anchored hemophore cfmA (305 aa).

The N-terminal stretch at 1 to 18 (MKASVSLLLLSAASMASA) is a signal peptide. Positions 19–111 (AMSVSQCAQM…GSGSGSDSGS (93 aa)) constitute a CFEM domain. Disulfide bonds link Cys-25–Cys-68, Cys-29–Cys-63, Cys-42–Cys-49, and Cys-51–Cys-84. Position 46 (Asp-46) interacts with heme. The tract at residues 92 to 287 (TATGAGGSSS…STGNVAPRGA (196 aa)) is disordered. A compositionally biased stretch (gly residues) spans 95 to 149 (GAGGSSSGSGSGSDSGSGSGSGSGSGSGSGSGSGSSSGSGSGSGSGSGSGSGSNS). Composition is skewed to low complexity over residues 150-186 (GSGSASSTATGTATGTATGTATGTATGTATGSENSTT), 196-259 (GASS…TATG), and 267-287 (GSASTTAPNSSSTGNVAPRGA). N-linked (GlcNAc...) asparagine glycans are attached at residues Asn-183, Asn-203, Asn-237, Asn-243, and Asn-275. Ser-276 is lipidated: GPI-like-anchor amidated serine. Residues 277–305 (SSTGNVAPRGAVVGSGAVGALALAALIIL) constitute a propeptide, removed in mature form.

This sequence belongs to the RBT5 family. Post-translationally, the GPI-like anchor contains a phosphoceramide lipid group. In terms of processing, the GPI-anchor is attached to the protein in the endoplasmic reticulum and serves to target the protein to the cell surface. There, the glucosamine-inositol phospholipid moiety is cleaved off and the GPI-modified mannoprotein is covalently attached via its lipidless GPI glycan remnant to the 1,6-beta-glucan of the outer cell wall layer.

The protein localises to the secreted. Its subcellular location is the cell wall. The protein resides in the cell membrane. Functionally, GPI-anchored cell wall protein involved in stabilizing the cell wall. Not implicated in virulence, heme uptake and biofilm formation. In Aspergillus fumigatus (strain ATCC MYA-4609 / CBS 101355 / FGSC A1100 / Af293) (Neosartorya fumigata), this protein is GPI-anchored hemophore cfmA.